Here is a 183-residue protein sequence, read N- to C-terminus: Dual-action ribosomal maturation protein DarP (183 aa).

The segment at 1-21 (MKQKPEDWLNDVPDNQEDDED) is disordered.

This sequence belongs to the DarP family.

The protein localises to the cytoplasm. In terms of biological role, member of a network of 50S ribosomal subunit biogenesis factors which assembles along the 30S-50S interface, preventing incorrect 23S rRNA structures from forming. Promotes peptidyl transferase center (PTC) maturation. This is Dual-action ribosomal maturation protein DarP from Pectobacterium atrosepticum (strain SCRI 1043 / ATCC BAA-672) (Erwinia carotovora subsp. atroseptica).